A 553-amino-acid polypeptide reads, in one-letter code: Membrane protein insertase YidC (553 aa).

5 consecutive transmembrane segments (helical) span residues 7–24 (VLWV…DNWQ), 365–385 (WGWA…PLSA), 435–455 (LPVV…LASV), 474–494 (PYFI…SLNP), and 509–529 (PIAF…YYVV).

This sequence belongs to the OXA1/ALB3/YidC family. Type 1 subfamily. In terms of assembly, interacts with the Sec translocase complex via SecD. Specifically interacts with transmembrane segments of nascent integral membrane proteins during membrane integration.

Its subcellular location is the cell inner membrane. Its function is as follows. Required for the insertion and/or proper folding and/or complex formation of integral membrane proteins into the membrane. Involved in integration of membrane proteins that insert both dependently and independently of the Sec translocase complex, as well as at least some lipoproteins. Aids folding of multispanning membrane proteins. The chain is Membrane protein insertase YidC from Burkholderia multivorans (strain ATCC 17616 / 249).